A 188-amino-acid polypeptide reads, in one-letter code: ATP synthase subunit b (188 aa).

Residues 19–39 (VYVLGATIVSFLILFLFITYF) form a helical membrane-spanning segment.

The protein belongs to the ATPase B chain family. F-type ATPases have 2 components, F(1) - the catalytic core - and F(0) - the membrane proton channel. F(1) has five subunits: alpha(3), beta(3), gamma(1), delta(1), epsilon(1). F(0) has three main subunits: a(1), b(2) and c(10-14). The alpha and beta chains form an alternating ring which encloses part of the gamma chain. F(1) is attached to F(0) by a central stalk formed by the gamma and epsilon chains, while a peripheral stalk is formed by the delta and b chains.

The protein resides in the cell membrane. Its function is as follows. F(1)F(0) ATP synthase produces ATP from ADP in the presence of a proton or sodium gradient. F-type ATPases consist of two structural domains, F(1) containing the extramembraneous catalytic core and F(0) containing the membrane proton channel, linked together by a central stalk and a peripheral stalk. During catalysis, ATP synthesis in the catalytic domain of F(1) is coupled via a rotary mechanism of the central stalk subunits to proton translocation. Component of the F(0) channel, it forms part of the peripheral stalk, linking F(1) to F(0). This chain is ATP synthase subunit b, found in Mesomycoplasma hyopneumoniae (strain J / ATCC 25934 / NCTC 10110) (Mycoplasma hyopneumoniae).